Here is a 110-residue protein sequence, read N- to C-terminus: Large ribosomal subunit protein uL22 (110 aa).

Belongs to the universal ribosomal protein uL22 family. As to quaternary structure, part of the 50S ribosomal subunit.

In terms of biological role, this protein binds specifically to 23S rRNA; its binding is stimulated by other ribosomal proteins, e.g. L4, L17, and L20. It is important during the early stages of 50S assembly. It makes multiple contacts with different domains of the 23S rRNA in the assembled 50S subunit and ribosome. Functionally, the globular domain of the protein is located near the polypeptide exit tunnel on the outside of the subunit, while an extended beta-hairpin is found that lines the wall of the exit tunnel in the center of the 70S ribosome. In Acinetobacter baumannii (strain ACICU), this protein is Large ribosomal subunit protein uL22.